A 363-amino-acid chain; its full sequence is Chemerin-like receptor 1 (363 aa).

Topologically, residues 1-39 are extracellular; sequence MDFEDYNSTYEDSYTDDFDTIVALEEFSPLEGRVVRIFL. An N-linked (GlcNAc...) asparagine glycan is attached at Asn-7. Residues 40 to 60 form a helical membrane-spanning segment; that stretch reads VVVYSIICFLGILGNGLVIVI. Residues 61–71 are Cytoplasmic-facing; that stretch reads ATFKMKKTVNT. A helical membrane pass occupies residues 72-92; sequence VWFLNLAVADFLFNVFLPIHI. Over 93–109 the chain is Extracellular; the sequence is AYAAMDYHWVFGTAMCK. A disulfide bridge links Cys-108 with Cys-185. The chain crosses the membrane as a helical span at residues 110 to 130; that stretch reads ISNFLLIHNMYTSVFLLTVIS. At 131–152 the chain is on the cytoplasmic side; it reads FDRCISVLLPVWSQNHRSIRLA. Residues 153 to 173 form a helical membrane-spanning segment; sequence YMACVVIWVLAFFLSSPSLVF. Residues 174-220 lie on the Extracellular side of the membrane; that stretch reads RDTAHLHGKISCFNNFSLSATSSSSWPTHPQMDTVGFGRQMVVTITR. N-linked (GlcNAc...) asparagine glycosylation is present at Asn-188. A helical membrane pass occupies residues 221 to 241; that stretch reads FLCGFLVPVLIISACYFTIVY. Residues 242-256 lie on the Cytoplasmic side of the membrane; it reads KLRRNRLAKTKKPFK. Residues 257–277 traverse the membrane as a helical segment; sequence IIVTIIITFFLCWCPYHTLYL. Residues 278-283 lie on the Extracellular side of the membrane; that stretch reads LELHHR. The chain crosses the membrane as a helical span at residues 284 to 304; that stretch reads AMPGSVFSLGVPLATAIAIAN. Residues 305–363 are Cytoplasmic-facing; that stretch reads SCMNPILYVFMGQDFKKFKVALFSRLVNALSEDTGHSSYPSHRSFTKMSSMNERETSML. Phosphoserine is present on Ser-335. Residues 337–363 are disordered; that stretch reads DTGHSSYPSHRSFTKMSSMNERETSML. Thr-338 carries the post-translational modification Phosphothreonine. Polar residues predominate over residues 340–355; it reads HSSYPSHRSFTKMSSM. A phosphoserine mark is found at Ser-345, Ser-348, and Ser-354.

This sequence belongs to the chemokine-like receptor (CMKLR) family. Predominantly expressed in spleen and temperately in adipose tissue.

The protein localises to the cell membrane. Functionally, receptor for the chemoattractant adipokine chemerin/RARRES2 and for the omega-3 fatty acid derived molecule resolvin E1. Interaction with RARRES2 initiates activation of G proteins G(i)/G(o) and beta-arrestin pathways inducing cellular responses via second messenger pathways such as intracellular calcium mobilization, phosphorylation of MAP kinases MAPK1/MAPK3 (ERK1/2), TYRO3, MAPK14/P38MAPK and PI3K leading to multifunctional effects, like, reduction of immune responses, enhancing of adipogenesis and angionesis. Resolvin E1 down-regulates cytokine production in macrophages by reducing the activation of MAPK1/3 (ERK1/2) and NF-kappa-B. Positively regulates adipogenesis and adipocyte metabolism. This Sus scrofa (Pig) protein is Chemerin-like receptor 1 (CMLKR1).